A 1153-amino-acid chain; its full sequence is Protein unc-13 homolog 4B (1153 aa).

The disordered stretch occupies residues 54-84; it reads VLKSSLAPLEENGSGGEEDSDESPDGTLQLS. In terms of domain architecture, C2 1 spans 162 to 288; it reads ATHEEIYEAA…MKEIAVTASS (127 aa). Residues Asp-195, Asp-201, Asp-252, Phe-253, and Asp-254 each coordinate Ca(2+). Residues 637 to 755 enclose the MHD1 domain; it reads FEVYLILKRY…RCCIFYAQQM (119 aa). The MHD2 domain maps to 869 to 975; sequence SNSMDQLMMY…LETSDLIHQY (107 aa). Residues 990-1114 form the C2 2 domain; sequence PYGQLTITAQ…EATPPGEQIM (125 aa). The Ca(2+) site is built by Asp-1019, Asp-1025, Asp-1083, and Asp-1085.

The protein belongs to the unc-13 family. As to quaternary structure, interacts with Cam. The cofactor is Ca(2+).

The protein localises to the cytoplasm. Its subcellular location is the cytoskeleton. It localises to the cell projection. The protein resides in the filopodium. It is found in the late endosome. The protein localises to the lysosome. Its function is as follows. Essential for tracheal development in embryos. Functions with the GTPase Rab39 and downstream of dnd, to regulate lumen fusion between previously separate tracheal branches (anastomosis). Essential component of secretory lysosome-related organelles (SLs) that are present in the tracheal fusion tip cells (FCs). Mediates intracellular fusion of the extending tracheal stalk cell lumen in the FCs by recruiting the SNARE complex component Syx1A to the SLs, this may then enable the SLs to interact with complementary SNAREs (such as Syb) present in the apical membrane of the FC-FC interface and the membranes of the separate tracheal stalk cells. May also function in the maturation and exocytosis of the SLs. The sequence is that of Protein unc-13 homolog 4B from Drosophila melanogaster (Fruit fly).